The chain runs to 23 residues: Acidic phospholipase A2 CTs-A1 (23 aa).

It depends on Ca(2+) as a cofactor. Contains 7 disulfide bonds. Expressed by the venom gland.

Its subcellular location is the secreted. The catalysed reaction is a 1,2-diacyl-sn-glycero-3-phosphocholine + H2O = a 1-acyl-sn-glycero-3-phosphocholine + a fatty acid + H(+). Functionally, snake venom phospholipase A2 (PLA2) that shows a moderate inhibition of ADP-induced human platelet aggregation when tested on platelet rich plasma. Exhibits moderate hydrolytic activities and prefers the anionic micelles (dPPC with deoxycholate) to the zwitterionic micelles (dPPC with Triton X-100). PLA2 catalyzes the calcium-dependent hydrolysis of the 2-acyl groups in 3-sn-phosphoglycerides. The chain is Acidic phospholipase A2 CTs-A1 from Trimeresurus stejnegeri (Chinese green tree viper).